Reading from the N-terminus, the 173-residue chain is NEDD4-binding protein 2-like 1 (173 aa).

The interval 1–35 is disordered; that stretch reads MEESFLESFGRLSLRQQQPPPPRPPAPPPLRGTPP. Positions 18 to 32 are enriched in pro residues; sequence QPPPPRPPAPPPLRG.

As to quaternary structure, interacts with dynactin subunit proteins, including DCTN4, DCTN5 and DCTN5.

Its function is as follows. Might play a role in adipocyte differentiation and triglyceride accumulation. This is NEDD4-binding protein 2-like 1 (N4BP2L1) from Bos taurus (Bovine).